The primary structure comprises 310 residues: Glutaminase 1 (310 aa).

Residues S66, N117, E161, N168, Y192, Y244, and V262 each coordinate substrate. K294 bears the N6-acetyllysine mark.

The protein belongs to the glutaminase family. Homotetramer.

It carries out the reaction L-glutamine + H2O = L-glutamate + NH4(+). The sequence is that of Glutaminase 1 from Shigella flexneri.